We begin with the raw amino-acid sequence, 375 residues long: SSTETPPSYNQLNYNENLLRFFNSKPVTAPVELDPPKVEPSYVSSAREDAHRTLSPVQGFEGSGGTGSSGNFTTGSNLHMSSVTNTSNAGTGTSGTGNSGGGGGGGGGGGPGNGAVTPVTLTESLLNKHNDEMEKFMLKKHRESRGRSGEKNKKSANDTLKMVEYSGPGPGPGHGHGIKRGGSHSWEGEANKPKQLLTLNTGGMPPLLDIHTSSASLSKCQASGAGGGGSGSVGGTGNIGSGGSNAQPSTNQYAQSGLSCTQNINLWPPFSVGITTPTSVLSTHTAVAQSSFSTQHNLFPTFYYIPASIAASSPSGTSPNPRPHKHTLVHKSAEQPSTSQAAAATMPLQYMTGLMYPHPSLFYTHPAAAAATAMV.

Disordered stretches follow at residues 28–118 (TAPV…AVTP), 140–189 (KHRE…WEGE), and 220–254 (CQAS…NQYA). Positions 69-91 (SGNFTTGSNLHMSSVTNTSNAGT) are enriched in low complexity. A compositionally biased stretch (gly residues) spans 92 to 113 (GTSGTGNSGGGGGGGGGGGPGN). A compositionally biased stretch (basic and acidic residues) spans 145–156 (RGRSGEKNKKSA). Positions 224 to 243 (GAGGGGSGSVGGTGNIGSGG) are enriched in gly residues. The span at 245-254 (NAQPSTNQYA) shows a compositional bias: polar residues.

In terms of assembly, forms a heterodimer with timeless (TIM); the complex then translocates into the nucleus. Post-translationally, phosphorylated with a circadian rhythmicity, probably by the double-time protein (dbt). Phosphorylation could be implicated in the stability of per monomer and in the formation of heterodimer per-tim.

Its subcellular location is the nucleus. It localises to the cytoplasm. The protein localises to the perinuclear region. Its function is as follows. Essential for biological clock functions. Determines the period length of circadian and ultradian rhythms; an increase in PER dosage leads to shortened circadian rhythms and a decrease leads to lengthened circadian rhythms. Essential for the circadian rhythmicity of locomotor activity, eclosion behavior, and for the rhythmic component of the male courtship song that originates in the thoracic nervous system. The biological cycle depends on the rhythmic formation and nuclear localization of the TIM-PER complex. Light induces the degradation of TIM, which promotes elimination of PER. Nuclear activity of the heterodimer coordinatively regulates PER and TIM transcription through a negative feedback loop. Behaves as a negative element in circadian transcriptional loop. Does not appear to bind DNA, suggesting indirect transcriptional inhibition. This Drosophila capricorni (Fruit fly) protein is Period circadian protein (per).